Here is a 967-residue protein sequence, read N- to C-terminus: Leucine-rich repeat receptor-like protein kinase PXC2 (967 aa).

A signal peptide spans 1 to 20; that stretch reads MFNGAVSLLFLFLAVVSARA. Over 21–609 the chain is Extracellular; that stretch reads DPTFNDDVLG…QIRKSVLSIS (589 aa). 11 LRR repeats span residues 91-114, 115-139, 141-164, 165-189, 191-212, 214-236, 237-260, 262-284, 285-307, 308-332, and 334-356; these read LQFL…EFPH, LGSL…FFEQ, GSLR…LSYC, STLT…WFLK, LKSL…LGGL, DLRH…IGRC, SSLK…MKSL, SCSS…IGDI, ATLE…SLGN, LEFL…LSNC, and NLIS…MFTG. Asn-103 and Asn-127 each carry an N-linked (GlcNAc...) asparagine glycan. The N-linked (GlcNAc...) asparagine glycan is linked to Asn-171. Asn-219 carries an N-linked (GlcNAc...) asparagine glycan. 3 N-linked (GlcNAc...) asparagine glycosylation sites follow: Asn-296, Asn-315, and Asn-331. N-linked (GlcNAc...) asparagine glycosylation is present at Asn-374. LRR repeat units lie at residues 384–408, 410–432, 433–456, 457–480, 482–503, 504–528, and 530–552; these read LQGL…IWIL, SLLQ…IGGL, KVAE…IGGA, VSLK…ISNC, ALNT…SIGS, LSNL…IEKL, and HLLT…GFFN. N-linked (GlcNAc...) asparagine glycans are attached at residues Asn-415, Asn-446, Asn-479, Asn-487, Asn-516, Asn-535, Asn-540, Asn-571, and Asn-587. Residues 610–630 traverse the membrane as a helical segment; sequence ALIAIGAAAVIAIGVVAVTLL. Over 631–967 the chain is Cytoplasmic; that stretch reads NVHARSSVSR…LIQCPSHDLE (337 aa). Residues 687 to 959 form the Protein kinase domain; the sequence is LNKDSELGRG…EEVVKILELI (273 aa). ATP contacts are provided by residues 693–701 and Lys-715; that span reads LGRGGFGVV.

It belongs to the protein kinase superfamily. Ser/Thr protein kinase family. As to expression, expressed in the vascular strands of cotyledons, the shoot apex, hypocotyls, roots, leaves, stems and flowers.

The protein resides in the cell membrane. Its function is as follows. Leucine-rich repeat receptor-like protein kinase that may play a role in vascular tissues development. The chain is Leucine-rich repeat receptor-like protein kinase PXC2 from Arabidopsis thaliana (Mouse-ear cress).